The chain runs to 185 residues: Ribosome-recycling factor (185 aa).

It belongs to the RRF family.

It is found in the cytoplasm. Its function is as follows. Responsible for the release of ribosomes from messenger RNA at the termination of protein biosynthesis. May increase the efficiency of translation by recycling ribosomes from one round of translation to another. This chain is Ribosome-recycling factor, found in Streptococcus pneumoniae serotype 2 (strain D39 / NCTC 7466).